The primary structure comprises 376 residues: CC-adding tRNA nucleotidyltransferase (376 aa).

26-29 (GAVR) is a CTP binding site. Mg(2+)-binding residues include Asp39 and Asp41. Residues 94 to 95 (RD), Asn99, 136 to 145 (DPLRMLRAAR), and Arg176 contribute to the CTP site.

The protein belongs to the tRNA nucleotidyltransferase/poly(A) polymerase family. Mg(2+) serves as cofactor.

The catalysed reaction is a tRNA precursor + 2 CTP = a tRNA with a 3' CC end + 2 diphosphate. Its function is as follows. tRNA nucleotidyltransferase involved in the synthesis of the tRNA CCA terminus. Adds the two cytidine residues to tRNA. This chain is CC-adding tRNA nucleotidyltransferase, found in Shouchella clausii (strain KSM-K16) (Alkalihalobacillus clausii).